The primary structure comprises 127 residues: 3-aminoacrylate deaminase RutC (127 aa).

It belongs to the RutC family.

It catalyses the reaction (Z)-3-aminoacrylate + H2O + H(+) = 3-oxopropanoate + NH4(+). Functionally, involved in pyrimidine catabolism. Catalyzes the deamination of 3-aminoacrylate to malonic semialdehyde, a reaction that can also occur spontaneously. RutC may facilitate the reaction and modulate the metabolic fitness, rather than catalyzing essential functions. The polypeptide is 3-aminoacrylate deaminase RutC (Pseudomonas syringae pv. syringae (strain B728a)).